Here is a 95-residue protein sequence, read N- to C-terminus: 6 kDa early secretory antigenic target homolog (95 aa).

This sequence belongs to the WXG100 family. ESAT-6 subfamily. As to quaternary structure, forms a tight 1:1 complex with EsxB.

It localises to the secreted. A secreted protein that might play a role in virulence. The protein is 6 kDa early secretory antigenic target homolog (esxA) of Mycobacterium leprae (strain TN).